We begin with the raw amino-acid sequence, 434 residues long: Protein maelstrom homolog (434 aa).

Residues 4 to 73 constitute a DNA-binding region (HMG box); that stretch reads RKASRNAYYF…AQGKDSGPSE (70 aa). Disordered regions lie at residues 62–94 and 357–385; these read RAAQGKDSGPSEKQKPVFTPLRKPGMLVPKQNV and SHFNSANQEQRSNTPIGDYPSRAKISGQN. The segment covering 357–371 has biased composition (polar residues); sequence SHFNSANQEQRSNTP.

Belongs to the maelstrom family. In terms of assembly, interacts with SMARCB1, SIN3B and DDX4. Interacts with piRNA-associated proteins TDRD1, PIWIL1 and PIWIL2. Interacts with TEX19.

The protein resides in the cytoplasm. The protein localises to the nucleus. In terms of biological role, plays a central role during spermatogenesis by repressing transposable elements and preventing their mobilization, which is essential for the germline integrity. Acts via the piRNA metabolic process, which mediates the repression of transposable elements during meiosis by forming complexes composed of piRNAs and Piwi proteins and governs the methylation and subsequent repression of transposons. Its association with piP-bodies suggests a participation in the secondary piRNAs metabolic process. Required for the localization of germ-cell factors to the meiotic nuage. This is Protein maelstrom homolog (MAEL) from Macaca fascicularis (Crab-eating macaque).